A 259-amino-acid chain; its full sequence is Carbonic anhydrase 1 (259 aa).

Ala-1 is subject to N-acetylalanine. The 257-residue stretch at 2-258 (HAWGYGPTDG…LKGRHVRASF (257 aa)) folds into the Alpha-carbonic anhydrase domain. His-63 serves as the catalytic Proton donor/acceptor. His-93, His-95, and His-118 together coordinate Zn(2+). Residues Thr-197 and 197 to 198 (TT) each bind substrate.

The protein belongs to the alpha-carbonic anhydrase family. It depends on Zn(2+) as a cofactor.

The protein localises to the cytoplasm. The catalysed reaction is hydrogencarbonate + H(+) = CO2 + H2O. Its function is as follows. Catalyzes the reversible hydration of carbon dioxide. This chain is Carbonic anhydrase 1 (ca1), found in Chionodraco hamatus (Antarctic teleost icefish).